The chain runs to 1210 residues: uncharacterized protein (1210 aa).

The protein to E.coli molybdate metabolism regulator (MolR).

This is an uncharacterized protein from Escherichia coli (strain K12).